The following is a 142-amino-acid chain: Large ribosomal subunit protein uL11 (142 aa).

Belongs to the universal ribosomal protein uL11 family. In terms of assembly, part of the ribosomal stalk of the 50S ribosomal subunit. Interacts with L10 and the large rRNA to form the base of the stalk. L10 forms an elongated spine to which L12 dimers bind in a sequential fashion forming a multimeric L10(L12)X complex. One or more lysine residues are methylated.

Its function is as follows. Forms part of the ribosomal stalk which helps the ribosome interact with GTP-bound translation factors. In Mycobacterium tuberculosis (strain ATCC 25177 / H37Ra), this protein is Large ribosomal subunit protein uL11.